The following is a 367-amino-acid chain: DNA replication and repair protein RecF (367 aa).

30 to 37 (GSNGSGKT) provides a ligand contact to ATP.

This sequence belongs to the RecF family.

Its subcellular location is the cytoplasm. Its function is as follows. The RecF protein is involved in DNA metabolism; it is required for DNA replication and normal SOS inducibility. RecF binds preferentially to single-stranded, linear DNA. It also seems to bind ATP. The polypeptide is DNA replication and repair protein RecF (Pseudomonas putida (strain ATCC 700007 / DSM 6899 / JCM 31910 / BCRC 17059 / LMG 24140 / F1)).